Consider the following 328-residue polypeptide: Phosphate acyltransferase (328 aa).

This sequence belongs to the PlsX family. As to quaternary structure, homodimer. Probably interacts with PlsY.

The protein localises to the cytoplasm. It catalyses the reaction a fatty acyl-[ACP] + phosphate = an acyl phosphate + holo-[ACP]. It participates in lipid metabolism; phospholipid metabolism. In terms of biological role, catalyzes the reversible formation of acyl-phosphate (acyl-PO(4)) from acyl-[acyl-carrier-protein] (acyl-ACP). This enzyme utilizes acyl-ACP as fatty acyl donor, but not acyl-CoA. This Mycoplasma pneumoniae (strain ATCC 29342 / M129 / Subtype 1) (Mycoplasmoides pneumoniae) protein is Phosphate acyltransferase.